We begin with the raw amino-acid sequence, 192 residues long: Fe/S biogenesis protein NfuA (192 aa).

Residues cysteine 149 and cysteine 152 each contribute to the [4Fe-4S] cluster site.

Belongs to the NfuA family. As to quaternary structure, homodimer. [4Fe-4S] cluster serves as cofactor.

Functionally, involved in iron-sulfur cluster biogenesis. Binds a 4Fe-4S cluster, can transfer this cluster to apoproteins, and thereby intervenes in the maturation of Fe/S proteins. Could also act as a scaffold/chaperone for damaged Fe/S proteins. The polypeptide is Fe/S biogenesis protein NfuA (Proteus mirabilis (strain HI4320)).